The chain runs to 527 residues: Methane monooxygenase component A alpha chain (527 aa).

3 residues coordinate Fe cation: Glu-114, Glu-144, and His-147. The active site involves Cys-151. 3 residues coordinate Fe cation: Glu-209, Glu-243, and His-246.

It belongs to the TmoA/XamoA family. M.capsulatus has two forms of methane monooxygenase, a soluble and a membrane-bound type. The soluble type consists of four components (A to D): protein A, comprising three chains, in an alpha-2, beta-2, gamma-2 configuration, is a nonheme iron protein containing an unusual mu-hydroxo bridge structure at its active site and interacts with both oxygen and methane. Requires Fe cation as cofactor.

It catalyses the reaction methane + NADH + O2 + H(+) = methanol + NAD(+) + H2O. The catalysed reaction is methane + NADPH + O2 + H(+) = methanol + NADP(+) + H2O. Its function is as follows. Responsible for the initial oxygenation of methane to methanol in methanotrophs. It also catalyzes the monohydroxylation of a variety of unactivated alkenes, alicyclic, aromatic and heterocyclic compounds. This chain is Methane monooxygenase component A alpha chain (mmoX), found in Methylococcus capsulatus (strain ATCC 33009 / NCIMB 11132 / Bath).